Reading from the N-terminus, the 272-residue chain is 3-methyl-2-oxobutanoate hydroxymethyltransferase (272 aa).

Aspartate 43 and aspartate 82 together coordinate Mg(2+). Residues 43–44, aspartate 82, and lysine 112 contribute to the 3-methyl-2-oxobutanoate site; that span reads DS. A Mg(2+)-binding site is contributed by glutamate 114. Catalysis depends on glutamate 179, which acts as the Proton acceptor.

It belongs to the PanB family. Homodecamer; pentamer of dimers. Mg(2+) serves as cofactor.

It localises to the cytoplasm. It catalyses the reaction 3-methyl-2-oxobutanoate + (6R)-5,10-methylene-5,6,7,8-tetrahydrofolate + H2O = 2-dehydropantoate + (6S)-5,6,7,8-tetrahydrofolate. The protein operates within cofactor biosynthesis; (R)-pantothenate biosynthesis; (R)-pantoate from 3-methyl-2-oxobutanoate: step 1/2. Catalyzes the reversible reaction in which hydroxymethyl group from 5,10-methylenetetrahydrofolate is transferred onto alpha-ketoisovalerate to form ketopantoate. The chain is 3-methyl-2-oxobutanoate hydroxymethyltransferase from Staphylococcus aureus (strain MRSA252).